Here is a 210-residue protein sequence, read N- to C-terminus: Thymidylate kinase (210 aa).

Residue 10 to 17 (GLEGAGKS) coordinates ATP.

It belongs to the thymidylate kinase family.

The catalysed reaction is dTMP + ATP = dTDP + ADP. In terms of biological role, phosphorylation of dTMP to form dTDP in both de novo and salvage pathways of dTTP synthesis. This chain is Thymidylate kinase, found in Hamiltonella defensa subsp. Acyrthosiphon pisum (strain 5AT).